The following is a 142-amino-acid chain: MKTYMASASTIERKWYVVDAADYTLGRLASQVAAVLRGKNKPTYTPFLDCGDNVIVINADKVKVTGKKLDQKVYYSHSDYVGGLKETTLKEMMEKKPEKVIELAVKGMLPKGPLGRQMFTKLHVYAGPDHEQAAQKPEVLKF.

Belongs to the universal ribosomal protein uL13 family. In terms of assembly, part of the 50S ribosomal subunit.

In terms of biological role, this protein is one of the early assembly proteins of the 50S ribosomal subunit, although it is not seen to bind rRNA by itself. It is important during the early stages of 50S assembly. This is Large ribosomal subunit protein uL13 from Lachnospira eligens (strain ATCC 27750 / DSM 3376 / VPI C15-48 / C15-B4) (Eubacterium eligens).